Reading from the N-terminus, the 313-residue chain is Aspartate carbamoyltransferase catalytic subunit (313 aa).

Arg-59 and Thr-60 together coordinate carbamoyl phosphate. Position 87 (Lys-87) interacts with L-aspartate. 3 residues coordinate carbamoyl phosphate: Arg-109, His-137, and Gln-140. L-aspartate contacts are provided by Arg-170 and Arg-224. The carbamoyl phosphate site is built by Gly-265 and Pro-266.

It belongs to the aspartate/ornithine carbamoyltransferase superfamily. ATCase family. Heterododecamer (2C3:3R2) of six catalytic PyrB chains organized as two trimers (C3), and six regulatory PyrI chains organized as three dimers (R2).

It carries out the reaction carbamoyl phosphate + L-aspartate = N-carbamoyl-L-aspartate + phosphate + H(+). Its pathway is pyrimidine metabolism; UMP biosynthesis via de novo pathway; (S)-dihydroorotate from bicarbonate: step 2/3. Functionally, catalyzes the condensation of carbamoyl phosphate and aspartate to form carbamoyl aspartate and inorganic phosphate, the committed step in the de novo pyrimidine nucleotide biosynthesis pathway. This Sinorhizobium medicae (strain WSM419) (Ensifer medicae) protein is Aspartate carbamoyltransferase catalytic subunit.